The following is a 523-amino-acid chain: Synaptotagmin-10 (523 aa).

The Vesicular portion of the chain corresponds to 1–55 (MSFHKEDGVNSLCQKALHIVTELCFAGQVEWEKCSGIFPRDRGSQGGSSTDISVS). The cysteine motif stretch occupies residues 13 to 35 (CQKALHIVTELCFAGQVEWEKCS). The chain crosses the membrane as a helical span at residues 56-76 (LLAVVVSFCGLALLVVSLFVF). Residues 77-523 (WKLCWPCWKS…CPSPKPPSTP (447 aa)) are Cytoplasmic-facing. Threonine 136 carries the phosphothreonine modification. 2 C2 domains span residues 231–352 (ICGK…TVWK) and 363–496 (DLGE…THWH). Ca(2+) is bound by residues aspartate 262, aspartate 268, aspartate 320, phenylalanine 321, aspartate 322, serine 325, aspartate 328, aspartate 394, aspartate 400, aspartate 454, and aspartate 456.

It belongs to the synaptotagmin family. Homodimer; disulfide-linked via the cysteine motif. Can also form heterodimers with SYT3, SYT6, SYT7 and SYT9. It depends on Ca(2+) as a cofactor.

Its subcellular location is the cytoplasmic vesicle. The protein localises to the secretory vesicle membrane. In terms of biological role, ca(2+) sensor specifically required for the Ca(2+)-dependent exocytosis of secretory vesicles containing IGF1 in neurons of the olfactory bulb. Exocytosis of IGF1 is required for sensory perception of smell. Not involved in Ca(2+)-dependent synaptic vesicle exocytosis. Acts through Ca(2+) and phospholipid binding to the C2 domain: Ca(2+) induces binding of the C2-domains to phospholipid membranes and to assembled SNARE-complexes; both actions contribute to triggering exocytosis. In Pongo abelii (Sumatran orangutan), this protein is Synaptotagmin-10 (SYT10).